A 425-amino-acid chain; its full sequence is MADKEAAFDDAVEERVINEEYKIWKKNTPFLYDLVMTHALEWPSLTAQWLPDVTRPDGKDFSIHRLVLGTHTSDEQNHLVIASVQLPNDDAQFDASHYDSEKGEFGGFGSVSGKIEIEIKINHEGEVNRARYMPQNPCIIATKTPSCDVLVFDYTKHPSKPDPSGECNPDLRLRGHQKEGYGLSWNPNLSGNLLSASDDHTICLWDISAVPKEGKVVDAKTIFTGHTAVVEDVSWHLLHESLFGSVADDQKLMIWDTRSNNTSKPSHSVDAHTAEVNCLSFNPYSEFILATGSADKTVALWDLRNLKLKLHSFESHKDEIFQVQWSPHNETILASSGTDRRLNVWDLSKIGEEQSPEDAEDGPPELLFIHGGHTAKISDFSWNPNEPWVICSVSEDNIMQVWQMAENIYNDEDTEGSVDPEGQGS.

A2 is modified (N-acetylalanine). WD repeat units lie at residues 32–125, 126–175, 176–223, 225–270, 271–314, 315–371, and 372–404; these read YDLV…NHEG, EVNR…RLRG, HQKE…KTIF, GHTA…HSVD, AHTA…HSFE, SHKD…FIHG, and GHTAKISDFSWNPNEPWVICSVSEDNIMQVWQM.

The protein belongs to the WD repeat RBAP46/RBAP48/MSI1 family. As to quaternary structure, binds directly to histone H4, probably via helix 1 of the histone fold, a region that is not accessible when histone H4 is in chromatin. Probably forms a large corepressor complex that contains ncor1, sin3a, hdac1-A and/or hdac1-B, hdac2, rbbp4-A and/or rbbp4-B and possibly rbbp7.

The protein resides in the nucleus. Its subcellular location is the chromosome. It is found in the telomere. Core histone-binding subunit that may target chromatin assembly factors, chromatin remodeling factors and histone deacetylases to their histone substrates in a manner that is regulated by nucleosomal DNA. Component of several complexes which regulate chromatin metabolism. This Xenopus laevis (African clawed frog) protein is Histone-binding protein RBBP4-B (rbbp4-b).